Here is a 159-residue protein sequence, read N- to C-terminus: HSP70 co-chaperone SNL1 (159 aa).

The Perinuclear space portion of the chain corresponds to 1–12 (MSHNAMEHWKSK). The helical; Signal-anchor for type II membrane protein transmembrane segment at 13–35 (LSKTSTSTYVLLAVIAVVFLVTI) threads the bilayer. Topologically, residues 36–159 (RRPNGSKGKS…AMLKSLDSLK (124 aa)) are cytoplasmic. Positions 39-64 (NGSKGKSSKKRASKKNKKGKNQFEKA) are disordered. Positions 44-58 (KSSKKRASKKNKKGK) are enriched in basic residues. Residues 73-159 (QIDNVSLRYG…AMLKSLDSLK (87 aa)) enclose the BAG domain.

Interacts with the HSP70 family members SSA1, SSA4, and SSB1. These interactions are strongly reduced by ADP and ATP.

The protein localises to the endoplasmic reticulum membrane. It is found in the nucleus membrane. In terms of biological role, stimulator of ATPase activity of molecular chaperones of the HSP70 family (principally of the SSA class). Stimulation is important for HSP70-substrate complex dissociation after folding of newly synthesized or refolded proteins. SNL1 is probably involved in nuclear pore biogenesis and in particular the folding or refolding of misfolded NUP116, GLE2 and NIC96. The polypeptide is HSP70 co-chaperone SNL1 (SNL1) (Saccharomyces cerevisiae (strain ATCC 204508 / S288c) (Baker's yeast)).